The primary structure comprises 328 residues: Malate dehydrogenase (328 aa).

G16 to S22 lines the NAD(+) pocket. Residues R97 and R103 each contribute to the substrate site. Residues N110, Q117, and V134–N136 contribute to the NAD(+) site. The substrate site is built by N136 and R167. The active-site Proton acceptor is H192.

It belongs to the LDH/MDH superfamily. MDH type 2 family. Homotetramer.

The catalysed reaction is (S)-malate + NAD(+) = oxaloacetate + NADH + H(+). Citrate activates the enzyme in the oxidation of malate to oxaloacetate and inhibits it in the reverse reaction. Catalyzes the reversible oxidation of malate to oxaloacetate. Exhibits higher catalytic efficiency for oxaloacetate reduction than for malate oxidation in vitro. Almost equally active both for NADH and NADPH on the bases of the kcat values at pH 6.5, but catalytic efficiency for oxaloacetate reduction is 50-fold higher with NADH. This is Malate dehydrogenase from Corynebacterium glutamicum (strain ATCC 13032 / DSM 20300 / JCM 1318 / BCRC 11384 / CCUG 27702 / LMG 3730 / NBRC 12168 / NCIMB 10025 / NRRL B-2784 / 534).